The chain runs to 228 residues: Cutinase CUT1 (228 aa).

An N-terminal signal peptide occupies residues methionine 1–alanine 16. Residues cysteine 49 and cysteine 127 are joined by a disulfide bond. The Nucleophile role is filled by serine 138. Cysteine 189 and cysteine 196 form a disulfide bridge. The N-linked (GlcNAc...) asparagine glycan is linked to asparagine 190. Aspartate 193 is an active-site residue. Residue histidine 206 is the Proton donor/acceptor of the active site.

The protein belongs to the cutinase family. Post-translationally, the 2 disulfide bonds play a critical role in holding the catalytic residues in juxta-position; reduction of the disulfide bridges results in the complete inactivation of the enzyme.

Its subcellular location is the secreted. The enzyme catalyses cutin + H2O = cutin monomers.. Its function is as follows. Catalyzes the hydrolysis of complex carboxylic polyesters found in the cell wall of plants. Degrades cutin, a macromolecule that forms the structure of the plant cuticle. Required for efficient penetration of the host plant cuticle by the appressorium during the initial stage of fungal infection. The chain is Cutinase CUT1 from Pyricularia oryzae (strain 70-15 / ATCC MYA-4617 / FGSC 8958) (Rice blast fungus).